The following is a 28-amino-acid chain: Mast cell degranulating peptide (28 aa).

2 cysteine pairs are disulfide-bonded: Cys-2-Cys-18 and Cys-4-Cys-22.

Expressed by the venom gland.

The protein resides in the secreted. In terms of biological role, mast cell degranulating peptide. In Bombus pensylvanicus (American bumblebee), this protein is Mast cell degranulating peptide.